Here is a 403-residue protein sequence, read N- to C-terminus: Protein STRICTOSIDINE SYNTHASE-LIKE 13 (403 aa).

The first 42 residues, 1–42 (MEKKGQHGTYESMMTHHPILCIIALSVLFIAIDPFHMSPIGG), serve as a signal peptide directing secretion. N-linked (GlcNAc...) asparagine glycans are attached at residues N66 and N206.

This sequence belongs to the strictosidine synthase family.

It is found in the vacuole. Functionally, required for the exine formation during pollen development. The sequence is that of Protein STRICTOSIDINE SYNTHASE-LIKE 13 from Arabidopsis thaliana (Mouse-ear cress).